A 574-amino-acid polypeptide reads, in one-letter code: 5'-nucleotidase (574 aa).

A signal peptide spans 1-26; it reads MNPGAARTPALRILALGALLWPAARP. Zn(2+)-binding residues include aspartate 36 and histidine 38. Cysteine 51 and cysteine 57 are disulfide-bonded. Residue asparagine 53 is glycosylated (N-linked (GlcNAc...) asparagine). Aspartate 85, asparagine 117, histidine 220, and histidine 243 together coordinate Zn(2+). N-linked (GlcNAc...) asparagine glycans are attached at residues asparagine 311 and asparagine 333. Cystine bridges form between cysteine 353–cysteine 358 and cysteine 365–cysteine 387. Position 354 (arginine 354) interacts with AMP. Arginine 354 contributes to the IMP binding site. 2 residues coordinate AMP: asparagine 390 and arginine 395. Residues asparagine 390 and arginine 395 each coordinate IMP. N-linked (GlcNAc...) asparagine glycosylation occurs at asparagine 403. Phenylalanine 417 lines the AMP pocket. An IMP-binding site is contributed by phenylalanine 417. A disulfide bridge connects residues cysteine 476 and cysteine 479. Phenylalanine 500 and aspartate 506 together coordinate AMP. IMP is bound by residues phenylalanine 500 and aspartate 506. The GPI-anchor amidated serine moiety is linked to residue serine 549. Positions 550–574 are cleaved as a propeptide — removed in mature form; it reads AGSHCCGSFSLIFLSVLAVIIILYQ.

Belongs to the 5'-nucleotidase family. As to quaternary structure, homodimer. Zn(2+) serves as cofactor.

It localises to the cell membrane. The enzyme catalyses a ribonucleoside 5'-phosphate + H2O = a ribonucleoside + phosphate. It carries out the reaction a 2'-deoxyribonucleoside 5'-phosphate + H2O = a 2'-deoxyribonucleoside + phosphate. It catalyses the reaction dTMP + H2O = thymidine + phosphate. The catalysed reaction is CMP + H2O = cytidine + phosphate. The enzyme catalyses IMP + H2O = inosine + phosphate. It carries out the reaction AMP + H2O = adenosine + phosphate. It catalyses the reaction GMP + H2O = guanosine + phosphate. The catalysed reaction is UMP + H2O = uridine + phosphate. The enzyme catalyses dAMP + H2O = 2'-deoxyadenosine + phosphate. It carries out the reaction dCMP + H2O = 2'-deoxycytidine + phosphate. Catalyzes the hydrolysis of nucleotide monophosphates, releasing inorganic phosphate and the corresponding nucleoside, with AMP being the preferred substrate. Shows a preference for ribonucleotide monophosphates over their equivalent deoxyribose forms. Other substrates include IMP, UMP, GMP, CMP, dAMP, dCMP, dTMP, NAD and NMN. The sequence is that of 5'-nucleotidase (NT5E) from Bos taurus (Bovine).